Here is a 95-residue protein sequence, read N- to C-terminus: Small ubiquitin-related modifier 2-B (95 aa).

Residue lysine 11 forms a Glycyl lysine isopeptide (Lys-Gly) (interchain with G-Cter in SUMO) linkage. In terms of domain architecture, Ubiquitin-like spans 16–95 (DHINLKVAGQ…VFQQQTGGSY (80 aa)). Glycine 93 is covalently cross-linked (Glycyl lysine isopeptide (Gly-Lys) (interchain with K-? in acceptor proteins)). The propeptide occupies 94–95 (SY).

The protein belongs to the ubiquitin family. SUMO subfamily. Interacts with sae2 and ube2i. Covalently attached to a number of proteins, including top2. Post-translationally, polymeric chains can be formed through Lys-11 cross-linking. Cleavage of precursor form by a sentrin-specific protease is necessary for function.

It is found in the nucleus. Functionally, ubiquitin-like protein that can be covalently attached to proteins as a monomer or as a lysine-linked polymer. Covalent attachment via an isopeptide bond to its substrates requires prior activation by the E1 complex sae1-sae2 and linkage to the E2 enzyme ube2i, and can be promoted by an E3 ligase such as pias1-4. This post-translational modification on lysine residues of proteins plays a crucial role in a number of cellular processes such as nuclear transport, DNA replication and repair, mitosis and signal transduction. Polymeric sumo2 chains are also susceptible to polyubiquitination which functions as a signal for proteasomal degradation of modified proteins. The chain is Small ubiquitin-related modifier 2-B (sumo2-b) from Xenopus laevis (African clawed frog).